The chain runs to 464 residues: ERO1-like protein alpha (464 aa).

The N-terminal stretch at 1 to 23 (MGRAWGLLVGLLGVVWLLRLGHG) is a signal peptide. Cystine bridges form between Cys-35–Cys-48, Cys-37–Cys-46, Cys-85–Cys-387, Cys-94–Cys-99, Cys-94–Cys-130, Cys-99–Cys-104, Cys-207–Cys-237, and Cys-390–Cys-393. Phosphoserine occurs at positions 106, 142, and 144. Arg-186, Thr-188, and Trp-199 together coordinate FAD. FAD contacts are provided by Ser-248 and His-251. Asn-276 carries N-linked (GlcNAc...) asparagine glycosylation. FAD contacts are provided by Arg-283 and Arg-296. A glycan (N-linked (GlcNAc...) asparagine) is linked at Asn-380.

The protein belongs to the EROs family. As to quaternary structure, predominantly monomer. May function both as a monomer and a homodimer. Interacts with PDILT. Interacts with ERP44; the interaction results in retention of ERO1A in the endoplasmic reticulum. Requires FAD as cofactor. Post-translationally, N-glycosylated. The Cys-94/Cys-99 and Cys-390/Cys-393 disulfide bonds constitute the redox-active center. The Cys-94/Cys-99 disulfide bond may accept electron from P4HB and funnel them to the active site disulfide Cys-390/Cys-393. The regulatory Cys-99/Cys-104 disulfide bond stabilizes the other regulatory bond Cys-94/Cys-130. In terms of processing, phosphorylated on Ser-144 by FAM20C in the Golgi which increases its enzymatic activity. Phosphorylation is induced by lactation. It is also induced by hypoxia and reductive stress. Widely expressed (at protein level). In the mammary gland, expressed at higher levels in lactating mice than in virgin mice (at protein level).

The protein resides in the endoplasmic reticulum membrane. It localises to the golgi apparatus lumen. Its subcellular location is the secreted. The protein localises to the cell projection. It is found in the dendrite. With respect to regulation, enzyme activity is tightly regulated to prevent the accumulation of reactive oxygen species in the endoplasmic reticulum. Reversibly down-regulated by the formation of disulfide bonds between the active site Cys-94 and Cys-130, and between Cys-99 and Cys-104. Glutathione may be required to regulate its activity in the endoplasmic reticulum. In terms of biological role, oxidoreductase involved in disulfide bond formation in the endoplasmic reticulum. Efficiently reoxidizes P4HB/PDI, the enzyme catalyzing protein disulfide formation, in order to allow P4HB to sustain additional rounds of disulfide formation. Following P4HB reoxidation, passes its electrons to molecular oxygen via FAD, leading to the production of reactive oxygen species (ROS) in the cell. Required for the proper folding of immunoglobulins. Plays an important role in ER stress-induced, CHOP-dependent apoptosis by activating the inositol 1,4,5-trisphosphate receptor IP3R1. In Mus musculus (Mouse), this protein is ERO1-like protein alpha.